Consider the following 392-residue polypeptide: Na(+)/H(+) antiporter NhaA 2 (392 aa).

Transmembrane regions (helical) follow at residues 20–40, 63–83, 99–119, 127–147, 158–178, 181–201, 209–229, 265–285, 298–318, 336–356, and 365–385; these read FFAA…AALI, VEHW…GLEI, ALPG…YVAF, IGGW…VLSL, IFLS…IALF, SDLS…LVAL, LLPY…SGIH, VAFA…LSGI, VALG…ALAI, GVAA…ALAF, and EVKV…VVVL.

The protein belongs to the NhaA Na(+)/H(+) (TC 2.A.33) antiporter family.

The protein resides in the cell inner membrane. The catalysed reaction is Na(+)(in) + 2 H(+)(out) = Na(+)(out) + 2 H(+)(in). In terms of biological role, na(+)/H(+) antiporter that extrudes sodium in exchange for external protons. This is Na(+)/H(+) antiporter NhaA 2 from Pseudomonas savastanoi pv. phaseolicola (strain 1448A / Race 6) (Pseudomonas syringae pv. phaseolicola (strain 1448A / Race 6)).